The chain runs to 509 residues: Maturase K (509 aa).

This sequence belongs to the intron maturase 2 family. MatK subfamily.

The protein resides in the plastid. The protein localises to the chloroplast. Usually encoded in the trnK tRNA gene intron. Probably assists in splicing its own and other chloroplast group II introns. This is Maturase K from Nicotiana plumbaginifolia (Leadwort-leaved tobacco).